The sequence spans 49 residues: Large ribosomal subunit protein bL33A (49 aa).

The protein belongs to the bacterial ribosomal protein bL33 family.

The sequence is that of Large ribosomal subunit protein bL33A from Streptococcus pneumoniae (strain Hungary19A-6).